The chain runs to 76 residues: uncharacterized protein (76 aa).

This is an uncharacterized protein from Enterobacteria phage T4 (Bacteriophage T4).